Reading from the N-terminus, the 274-residue chain is Large ribosomal subunit protein uL2cz/uL2cy (274 aa).

Disordered regions lie at residues 1–25 and 224–274; these read MAIH…VKSN and NPVD…RRSK.

Belongs to the universal ribosomal protein uL2 family. Part of the 50S ribosomal subunit.

The protein resides in the plastid. It localises to the chloroplast. This chain is Large ribosomal subunit protein uL2cz/uL2cy (rpl2-A), found in Cucumis sativus (Cucumber).